A 358-amino-acid polypeptide reads, in one-letter code: Transcriptional repressor protein KorB (358 aa).

A compositionally biased stretch (low complexity) spans 1 to 42 (MTAAQAKTTKKNTAAAAQEAAGAAQPSGLGLDSIGDLSSLLD). Disordered regions lie at residues 1 to 79 (MTAA…FSPE) and 256 to 305 (DPNT…DKLK). Residues 275-285 (AGDGQDGEDGD) are compositionally biased toward acidic residues. Residues 286–305 (QDGKDAKEKGAKEPDPDKLK) show a composition bias toward basic and acidic residues.

It belongs to the ParB family.

In terms of biological role, in conjunction with KorA, inhibits the transcription of the kilA, trfA and korAB operons. Is also involved in the negative control of the kilB operon. This chain is Transcriptional repressor protein KorB (korB), found in Escherichia coli.